A 148-amino-acid chain; its full sequence is Large ribosomal subunit protein uL15 (148 aa).

A disordered region spans residues 1-61 (MELNNLKPAI…GGQMPMQRRL (61 aa)). Basic residues predominate over residues 30-39 (TATKGHKGQK).

Belongs to the universal ribosomal protein uL15 family. As to quaternary structure, part of the 50S ribosomal subunit.

In terms of biological role, binds to the 23S rRNA. In Geobacter metallireducens (strain ATCC 53774 / DSM 7210 / GS-15), this protein is Large ribosomal subunit protein uL15.